The primary structure comprises 462 residues: MPAREYNYVEGFGGYGSLDDDDSDRDSERRNHDLGQRTITTSPTGVSRHAALNRYMIPGRINPLFRPTDAAQPPIVSTSTSASATEPTNRIGPGRIKETPETNFNAFLIAQLTRMEEQNANLKEEISLMKKEQELFFLENQKKLEKGFKDINKYVEDVSAMKEVFKEVVGIMTGERIRFIDHTGENVTPQEAARVGNPSTSTQAHQSQSRSTNWQEYSMHASILAGDPRIKPEPGLSDFENGEYDGNESDENATTRNLPLNNPDSVSNADDSNNQLDGTGNENDIRNRRGCVGTSYKLNRAIQNVTDAAREYFEGLPGQPSVLSLERRYGSTWRRSAKERTLFTKRMTIIKRIIDIKDDPSKYGLSLPENKISRNQAIKVVENIRLGNNTFKGHHCRLSMSQLYEYFSKKMDKLEDYSLTLKRRGKPRRIFLLEEREARLSLQQPHSIPNSSTGTPEHDQDT.

Disordered stretches follow at residues 11-43 (GFGG…TTSP) and 66-97 (RPTD…GRIK). 2 positions are modified to phosphoserine: Ser-17 and Ser-23. The segment covering 26 to 35 (DSERRNHDLG) has biased composition (basic and acidic residues). The homodimerization region stretch occupies residues 81 to 140 (SASATEPTNRIGPGRIKETPETNFNAFLIAQLTRMEEQNANLKEEISLMKKEQELFFLEN). A coiled-coil region spans residues 105 to 135 (NAFLIAQLTRMEEQNANLKEEISLMKKEQEL). Disordered regions lie at residues 190–214 (QEAA…STNW) and 226–289 (GDPR…RNRR). A compositionally biased stretch (polar residues) spans 197 to 214 (NPSTSTQAHQSQSRSTNW). Lys-231 participates in a covalent cross-link: Glycyl lysine isopeptide (Lys-Gly) (interchain with G-Cter in SUMO). A phosphoserine mark is found at Ser-237 and Ser-249. A compositionally biased stretch (acidic residues) spans 240–251 (ENGEYDGNESDE). The segment covering 252-282 (NATTRNLPLNNPDSVSNADDSNNQLDGTGNE) has biased composition (polar residues). A Phosphothreonine modification is found at Thr-254. Residues 296-385 (YKLNRAIQNV…QAIKVVENIR (90 aa)) form a GCR1 DNA-binding region region. The span at 441–455 (SLQQPHSIPNSSTGT) shows a compositional bias: polar residues. The tract at residues 441-462 (SLQQPHSIPNSSTGTPEHDQDT) is disordered.

Homodimer. Interacts with SLX5. Post-translationally, sumoylated at Lys-231 and subsequently ubiquitinated by the SUMO-targeted ubiquitin ligase (STUbL) complex SLX5/SLX8.

It is found in the chromosome. In terms of biological role, transcription factor-like protein that binds to specific DNA motifs called ub-HS-motif associated with several locations where proteins other than histone H2B are ubiquitinated (ub-hotspots). Ubiquitination at these sites depends on the SUMO-targeted ubiquitin ligase (STUbL) complex SLX5/SLX8 and protein turnover on the CDC48 segregase. UBC9, SIZ1, or SIZ2 sumoylate DNA-bound EUC1 to stabilize its DNA-binding. Sumoylated EUC1 acts a cofactor required for the recruitment of the SLX5/SLX8 STUbL complex via specific contacts between EUC1 and SLX5, as well as an additional SUMO-mediated interaction. SLX5/SLX8 then ubiquitinates EUC1 and presumably other targets at ub-hotspots, and the CDC48/UFD1/NPL4 complex, together with UBX4 and UBX5, removes Lys-48-linked ubiquitinated proteins from chromatin. Ubiquitinated proteins could be either degraded by the proteasome or recycled by deubiquitination. EUC1 itself does not seem to underlie extensive turnover, as it is a very stable protein. EUC1 is able to act as a transcription factor, but its function at ub-hotspots does not seem to depend on this ability. EUC1-mediated ub-hotspots are crucial during stress responses when gene expression control is impaired. The sequence is that of Transcription factor-like protein EUC1 from Saccharomyces cerevisiae (strain ATCC 204508 / S288c) (Baker's yeast).